We begin with the raw amino-acid sequence, 475 residues long: Cytochrome c-552 (475 aa).

The N-terminal stretch at 1 to 29 (MSIKHWMSAPIAVATLFASQLLLAGSVLA) is a signal peptide. The disordered stretch occupies residues 38 to 57 (PRNDAFEQKHPDQYHSWKAT). Histidine 92 lines the heme c pocket. Heme is bound by residues cysteine 120, cysteine 123, and lysine 124. Positions 158, 161, 162, 207, 210, and 211 each coordinate heme c. Glutamate 213, tyrosine 214, lysine 259, and glutamine 261 together coordinate Ca(2+). A substrate-binding site is contributed by tyrosine 214. Histidine 262 lines the substrate pocket. Histidine 273, cysteine 280, cysteine 283, histidine 284, histidine 299, cysteine 312, cysteine 315, histidine 316, and histidine 391 together coordinate heme c.

This sequence belongs to the cytochrome c-552 family. Ca(2+) serves as cofactor. Heme c is required as a cofactor.

The protein localises to the periplasm. The catalysed reaction is 6 Fe(III)-[cytochrome c] + NH4(+) + 2 H2O = 6 Fe(II)-[cytochrome c] + nitrite + 8 H(+). It functions in the pathway nitrogen metabolism; nitrate reduction (assimilation). In terms of biological role, catalyzes the reduction of nitrite to ammonia, consuming six electrons in the process. The protein is Cytochrome c-552 of Vibrio parahaemolyticus serotype O3:K6 (strain RIMD 2210633).